Reading from the N-terminus, the 314-residue chain is Olfactory receptor 10A3 (314 aa).

The Extracellular segment spans residues 1-25; that stretch reads MKRQNQSCVVEFILLGFSNFPELQV. Residue Asn5 is glycosylated (N-linked (GlcNAc...) asparagine). Residues 26–46 traverse the membrane as a helical segment; the sequence is QLFGVFLVIYVVTLMGNAIIT. At 47–54 the chain is on the cytoplasmic side; that stretch reads VIISLNQS. A helical membrane pass occupies residues 55-75; the sequence is LHVPMYLFLLNLSVVEVSFSA. At 76–99 the chain is on the extracellular side; it reads VITPEMLVVLSTEKTMISFVGCFA. A disulfide bridge connects residues Cys97 and Cys189. Residues 100 to 120 traverse the membrane as a helical segment; it reads QMYFILLFGGTECFLLGAMAY. Topologically, residues 121–139 are cytoplasmic; that stretch reads DRFAAICHPLNYPVIMNRG. Residues 140–160 form a helical membrane-spanning segment; the sequence is VFMKLVIFSWISGIMVATVQT. Over 161 to 197 the chain is Extracellular; that stretch reads TWVFSFPFCGPNEINHLFCETPPVLELVCADTFLFEI. A helical transmembrane segment spans residues 198 to 217; the sequence is YAFTGTILIVMVPFLLILLS. At 218–237 the chain is on the cytoplasmic side; that stretch reads YIRVLFAILKMPSTTGRQKA. The chain crosses the membrane as a helical span at residues 238–258; the sequence is FSTCASHLTSVTLFYGTANMT. Topologically, residues 259-271 are extracellular; sequence YLQPKSGYSPETK. Residues 272-292 traverse the membrane as a helical segment; it reads KLISLAYTLLTPLLNPLIYSL. The Cytoplasmic segment spans residues 293–314; it reads RNSEMKRTLIKLWRRKVILHTF.

It belongs to the G-protein coupled receptor 1 family.

The protein resides in the cell membrane. Its function is as follows. Odorant receptor. The sequence is that of Olfactory receptor 10A3 (OR10A3) from Homo sapiens (Human).